Here is a 1216-residue protein sequence, read N- to C-terminus: ATP-dependent helicase/nuclease subunit A (1216 aa).

In terms of domain architecture, UvrD-like helicase ATP-binding spans 26 to 488; it reads QKKTAEQIEA…ILLKENFRSS (463 aa). 47–54 provides a ligand contact to ATP; sequence ASAGSGKT. In terms of domain architecture, UvrD-like helicase C-terminal spans 515 to 802; that stretch reads KHQLVFANTK…ELMTIHKSKG (288 aa).

Belongs to the helicase family. AddA subfamily. Heterodimer of AddA and AddB/RexB. The cofactor is Mg(2+).

The enzyme catalyses Couples ATP hydrolysis with the unwinding of duplex DNA by translocating in the 3'-5' direction.. It catalyses the reaction ATP + H2O = ADP + phosphate + H(+). Functionally, the heterodimer acts as both an ATP-dependent DNA helicase and an ATP-dependent, dual-direction single-stranded exonuclease. Recognizes the chi site generating a DNA molecule suitable for the initiation of homologous recombination. The AddA nuclease domain is required for chi fragment generation; this subunit has the helicase and 3' -&gt; 5' nuclease activities. The sequence is that of ATP-dependent helicase/nuclease subunit A from Streptococcus pneumoniae (strain Hungary19A-6).